Consider the following 364-residue polypeptide: Protein-glutamate methylesterase/protein-glutamine glutaminase 1 (364 aa).

Positions 6-123 constitute a Response regulatory domain; sequence KVLCVDDSAL…RDGMLDYSEK (118 aa). D57 is modified (4-aspartylphosphate). The CheB-type methylesterase domain occupies 165–357; that stretch reads LVSTEKLIIV…RRIMARLASM (193 aa). Active-site residues include S177, H203, and D299.

It belongs to the CheB family. Post-translationally, phosphorylated by CheA. Phosphorylation of the N-terminal regulatory domain activates the methylesterase activity.

The protein resides in the cytoplasm. The catalysed reaction is [protein]-L-glutamate 5-O-methyl ester + H2O = L-glutamyl-[protein] + methanol + H(+). It carries out the reaction L-glutaminyl-[protein] + H2O = L-glutamyl-[protein] + NH4(+). Functionally, involved in chemotaxis. Part of a chemotaxis signal transduction system that modulates chemotaxis in response to various stimuli. Catalyzes the demethylation of specific methylglutamate residues introduced into the chemoreceptors (methyl-accepting chemotaxis proteins or MCP) by CheR. Also mediates the irreversible deamidation of specific glutamine residues to glutamic acid. The polypeptide is Protein-glutamate methylesterase/protein-glutamine glutaminase 1 (Burkholderia mallei (strain ATCC 23344)).